A 72-amino-acid polypeptide reads, in one-letter code: UPF0352 protein Shal_2512 (72 aa).

This sequence belongs to the UPF0352 family.

The sequence is that of UPF0352 protein Shal_2512 from Shewanella halifaxensis (strain HAW-EB4).